A 653-amino-acid polypeptide reads, in one-letter code: MAKIHELSENLTNQIAAGEVIERPASVVKELVENAIDAQASRIRVEVQHSGLKQISVQDNGSGIAPDQVDLAFMRHATSKIQDEHDLFNIATLGFRGEALASIAAVAHVEILTSTGGQTATRAAFAGGVKKFQEDAGSAKGTKITVGDIFYNTPARLKYLKSPKTELLKIVDIVNRIALGHPEISLTLASDGKVLLRTPGNGNLKQDVANIYGRKVAEKMLTVENEDPDFTLYGLVSEANLTRSSRNFISILLNGRYIKNYQLSSALLDGYGNKLGGKYPIAVLAIEADPLLVDVNVHPTKEEVRLSKEKELSRLITSAVTEALMDEDEASPLFQLTPFKDKTQLDQLEFNLKPNVVDTRRPDDFQLEVSQVAEPEGKTDITNKKETETKEKAEKKENKQEEKEEKTSAPEYVDLNQVREDDQYVLTKSWDQHVKEQTALPPFAGGEEAASPVTSKADQLLRQHLPALRLLGQMGGYLLAEHEGDLYLIDQVAARRRLEYDQILASLEKDENYQQGLLEPLVFDFSVYDYQKLKDQLPLLRQLGLEMEDFGQNTLLMHSYPTWLKGEVTVQVRELLDQLLSSRENDGKSLLKLVAAKAAESNVSRRVNLTGAEAADLLLRLQTASDPYRDASGQLAVVRLSQNDLSKLFKKGK.

The disordered stretch occupies residues 368–413 (EVSQVAEPEGKTDITNKKETETKEKAEKKENKQEEKEEKTSAPEYV). The segment covering 375–408 (PEGKTDITNKKETETKEKAEKKENKQEEKEEKTS) has biased composition (basic and acidic residues).

The protein belongs to the DNA mismatch repair MutL/HexB family.

Its function is as follows. This protein is involved in the repair of mismatches in DNA. It is required for dam-dependent methyl-directed DNA mismatch repair. May act as a 'molecular matchmaker', a protein that promotes the formation of a stable complex between two or more DNA-binding proteins in an ATP-dependent manner without itself being part of a final effector complex. This is DNA mismatch repair protein MutL from Lactobacillus delbrueckii subsp. bulgaricus (strain ATCC 11842 / DSM 20081 / BCRC 10696 / JCM 1002 / NBRC 13953 / NCIMB 11778 / NCTC 12712 / WDCM 00102 / Lb 14).